The sequence spans 280 residues: Pantothenate synthetase (280 aa).

Residue 30 to 37 (MGYLHEGH) coordinates ATP. The active-site Proton donor is H37. Residue Q61 participates in (R)-pantoate binding. Q61 lines the beta-alanine pocket. An ATP-binding site is contributed by 147-150 (GQKD). Q153 contributes to the (R)-pantoate binding site. Residues V176 and 184–187 (MSSR) each bind ATP.

Belongs to the pantothenate synthetase family. Homodimer.

It localises to the cytoplasm. It carries out the reaction (R)-pantoate + beta-alanine + ATP = (R)-pantothenate + AMP + diphosphate + H(+). It functions in the pathway cofactor biosynthesis; (R)-pantothenate biosynthesis; (R)-pantothenate from (R)-pantoate and beta-alanine: step 1/1. In terms of biological role, catalyzes the condensation of pantoate with beta-alanine in an ATP-dependent reaction via a pantoyl-adenylate intermediate. The polypeptide is Pantothenate synthetase (Thermosipho melanesiensis (strain DSM 12029 / CIP 104789 / BI429)).